The chain runs to 700 residues: Calpain-2 catalytic subunit (700 aa).

Ala-2 is subject to N-acetylalanine. A propeptide spans Ala-2 to Gly-19 (anchors to the small subunit). The Calpain catalytic domain occupies Leu-45–Thr-344. 3 residues coordinate Ca(2+): Ile-89, Gly-91, and Asp-96. The active site involves Cys-105. Ca(2+) is bound by residues Glu-175, Gln-229, and Lys-230. Residues His-262 and Asn-286 contribute to the active site. Ca(2+) is bound by residues Glu-292, Asp-299, Gln-319, and Glu-323. The tract at residues Pro-345 to Asp-514 is domain III. The tract at residues Glu-515 to Asp-529 is linker. A domain IV region spans residues Ile-530–Leu-700. Ala-542, Asp-545, Glu-547, Glu-552, Asp-585, Asp-587, Ser-589, Lys-591, Glu-596, Asp-615, Asp-617, Ser-619, Thr-621, Glu-626, Asp-658, and Asn-661 together coordinate Ca(2+). 2 consecutive EF-hand domains span residues Phe-572–Gln-605 and Thr-602–Lys-637.

Belongs to the peptidase C2 family. As to quaternary structure, forms a heterodimer with a small (regulatory) subunit (CAPNS1). Interacts with CPEB3; this leads to cleavage of CPEB3. Ca(2+) serves as cofactor. In terms of tissue distribution, ubiquitous.

Its subcellular location is the cytoplasm. It is found in the cell membrane. The catalysed reaction is Broad endopeptidase specificity.. Its activity is regulated as follows. Activated by 200-1000 micromolar concentrations of calcium and inhibited by calpastatin. Its function is as follows. Calcium-regulated non-lysosomal thiol-protease which catalyzes limited proteolysis of substrates involved in cytoskeletal remodeling and signal transduction. Proteolytically cleaves MYOC at 'Arg-226'. Proteolytically cleaves CPEB3 following neuronal stimulation which abolishes CPEB3 translational repressor activity, leading to translation of CPEB3 target mRNAs. In Mus musculus (Mouse), this protein is Calpain-2 catalytic subunit (Capn2).